The chain runs to 277 residues: Indole-3-glycerol phosphate synthase (277 aa).

Belongs to the TrpC family.

The enzyme catalyses 1-(2-carboxyphenylamino)-1-deoxy-D-ribulose 5-phosphate + H(+) = (1S,2R)-1-C-(indol-3-yl)glycerol 3-phosphate + CO2 + H2O. Its pathway is amino-acid biosynthesis; L-tryptophan biosynthesis; L-tryptophan from chorismate: step 4/5. This chain is Indole-3-glycerol phosphate synthase, found in Pseudomonas putida (strain ATCC 47054 / DSM 6125 / CFBP 8728 / NCIMB 11950 / KT2440).